The chain runs to 215 residues: Urease accessory protein UreE (215 aa).

The disordered stretch occupies residues 134–215 (FDPEGGAYAP…HGHSHKHDHK (82 aa)). Over residues 164–206 (GHHDHADHEHDHKHDHGKHDHAGHDHAHDHHVHDEHCGHDHGH) the composition is skewed to basic and acidic residues.

Belongs to the UreE family.

Its subcellular location is the cytoplasm. In terms of biological role, involved in urease metallocenter assembly. Binds nickel. Probably functions as a nickel donor during metallocenter assembly. The protein is Urease accessory protein UreE of Rhodopseudomonas palustris (strain HaA2).